Here is an 884-residue protein sequence, read N- to C-terminus: MKILFEFIQDKLDIDLQTNSTYKENLKCGHFNGLDEILTTCFALPNSRKIALPCLPGDLSHKAVIDHCIIYLLTGELYNNVLTFGYKIARNEDVNNSLFCHSANVNVTLLKGAAWKMFHSLVGTYAFVDLLINYTVIQFNGQFFTQIVGNRCNEPHLPPKWAQRSSSSSATAAQIKQLTEPVTNKQFLHKLNINSSSFFPYSKILPSSSSIKKLTDLREAIFPTNLVKIPQRLKVRINLTLQKLLKRHKRLNYVSILNSICPPLEGTVLDLSHLSRQSPKERVLKFIIVILQKLLPQEMFGSKKNKGKIIKNLNLLLSLPLNGYLPFDSLLKKLRLKDFRWLFISDIWFTKHNFENLNQLAICFISWLFRQLIPKIIQTFFYCTEISSTVTIVYFRHDTWNKLITPFIVEYFKTYLVENNVCRNHNSYTLSNFNHSKMRIIPKKSNNEFRIIAIPCRGADEEEFTIYKENHKNAIQPTQKILEYLRNKRPTSFTKIYSPTQIADRIKEFKQRLLKKFNNVLPELYFMKFDVKSCYDSIPRMECMRILKDALKNENGFFVRSQYFFNTNTGVLKLFNVVNASRVPKPYELYIDNVRTVHLSNQDVINVVEMEIFKTALWVEDKCYIREDGLFQGSSLSAPIVDLVYDDLLEFYSEFKASPSQDTLILKLADDFLIISTDQQQVINIKKLAMGGFQKYNAKANRDKILAVSSQSDDDTVIQFCAMHIFVKELEVWKHSSTMNNFHIRSKSSKGIFRSLIALFNTRISYKTIDTNLNSTNTVLMQIDHVVKNISECYKSAFKDLSINVTQNMQFHSFLQRIIEMTVSGCPITKCDPLIEYEVRFTILNGFLESLSSNTSKFKDNIILLRKEIQHLQAYIYIYIHIVN.

Positions 422-725 constitute a Reverse transcriptase domain; that stretch reads CRNHNSYTLS…TVIQFCAMHI (304 aa). Mg(2+) contacts are provided by aspartate 530, aspartate 670, and aspartate 671.

This sequence belongs to the reverse transcriptase family. Telomerase subfamily. Catalytic subunit of the telomerase holoenzyme complex composed minimally of EST2 and the telomerase RNA template component.

The protein localises to the nucleus. It is found in the chromosome. The protein resides in the telomere. It catalyses the reaction DNA(n) + a 2'-deoxyribonucleoside 5'-triphosphate = DNA(n+1) + diphosphate. In terms of biological role, telomerase is a ribonucleoprotein enzyme essential for the replication of chromosome termini in most eukaryotes. It elongates telomeres. It is a reverse transcriptase that adds simple sequence repeats to chromosome ends by copying a template sequence within the RNA component of the enzyme. This chain is Telomerase reverse transcriptase (EST2), found in Saccharomyces cerevisiae (strain ATCC 204508 / S288c) (Baker's yeast).